The sequence spans 303 residues: ATP phosphoribosyltransferase (303 aa).

This sequence belongs to the ATP phosphoribosyltransferase family. Long subfamily. Requires Mg(2+) as cofactor.

It localises to the cytoplasm. The enzyme catalyses 1-(5-phospho-beta-D-ribosyl)-ATP + diphosphate = 5-phospho-alpha-D-ribose 1-diphosphate + ATP. It participates in amino-acid biosynthesis; L-histidine biosynthesis; L-histidine from 5-phospho-alpha-D-ribose 1-diphosphate: step 1/9. Its activity is regulated as follows. Feedback inhibited by histidine. Its function is as follows. Catalyzes the condensation of ATP and 5-phosphoribose 1-diphosphate to form N'-(5'-phosphoribosyl)-ATP (PR-ATP). Has a crucial role in the pathway because the rate of histidine biosynthesis seems to be controlled primarily by regulation of HisG enzymatic activity. This Stenotrophomonas maltophilia (strain R551-3) protein is ATP phosphoribosyltransferase.